Here is a 239-residue protein sequence, read N- to C-terminus: LexA repressor (239 aa).

A DNA-binding region (H-T-H motif) is located at residues Phe-26–Thr-46. Residues Ser-160 and Lys-198 each act as for autocatalytic cleavage activity in the active site.

This sequence belongs to the peptidase S24 family. In terms of assembly, homodimer.

It carries out the reaction Hydrolysis of Ala-|-Gly bond in repressor LexA.. Represses a number of genes involved in the response to DNA damage (SOS response), including recA and lexA. In the presence of single-stranded DNA, RecA interacts with LexA causing an autocatalytic cleavage which disrupts the DNA-binding part of LexA, leading to derepression of the SOS regulon and eventually DNA repair. The polypeptide is LexA repressor (Methylobacterium sp. (strain 4-46)).